Here is a 292-residue protein sequence, read N- to C-terminus: UPF0696 protein C11orf68 homolog (292 aa).

Residues 1–10 (MAAAAAAVAG) are compositionally biased toward low complexity. Residues 1-60 (MAAAAAAVAGAGRGGGGGAEPRQERSRARGWAGAERSEGRRMEPGEELEEEDSPGGREDG) form a disordered region. Positions 35 to 44 (ERSEGRRMEP) are enriched in basic and acidic residues.

The protein belongs to the UPF0696 family.

The polypeptide is UPF0696 protein C11orf68 homolog (Bos taurus (Bovine)).